The chain runs to 463 residues: NADH dehydrogenase [ubiquinone] iron-sulfur protein 2, mitochondrial (463 aa).

Residues 1–33 (MAALRALRCLRGVGAPVLRPGSGIRLPSQPSRG) constitute a mitochondrion transit peptide. Lys-62 carries the post-translational modification N6-acetyllysine. Arg-118 bears the Symmetric dimethylarginine mark. Cys-326, Cys-332, and Cys-347 together coordinate [4Fe-4S] cluster.

It belongs to the complex I 49 kDa subunit family. As to quaternary structure, core subunit of respiratory chain NADH dehydrogenase (Complex I) which is composed of 45 different subunits. Component of the iron-sulfur (IP) fragment of the enzyme. Interacts with NDUFAF3. Interacts with NDUFAF7. Interacts with CERS2. Requires [4Fe-4S] cluster as cofactor. Post-translationally, dimethylation at Arg-118 by NDUFAF7 takes place after NDUFS2 assembles into the complex I, leading to stabilize the early intermediate complex.

It is found in the mitochondrion inner membrane. It carries out the reaction a ubiquinone + NADH + 5 H(+)(in) = a ubiquinol + NAD(+) + 4 H(+)(out). Core subunit of the mitochondrial membrane respiratory chain NADH dehydrogenase (Complex I) which catalyzes electron transfer from NADH through the respiratory chain, using ubiquinone as an electron acceptor. Essential for the catalytic activity and assembly of complex I. Redox-sensitive, critical component of the oxygen-sensing pathway in the pulmonary vasculature which plays a key role in acute pulmonary oxygen-sensing and hypoxic pulmonary vasoconstriction. Plays an important role in carotid body sensing of hypoxia. Essential for glia-like neural stem and progenitor cell proliferation, differentiation and subsequent oligodendrocyte or neuronal maturation. This chain is NADH dehydrogenase [ubiquinone] iron-sulfur protein 2, mitochondrial (Ndufs2), found in Mus musculus (Mouse).